Consider the following 537-residue polypeptide: Phosphoenolpyruvate carboxykinase (ATP) (537 aa).

3 residues coordinate substrate: Arg-61, Tyr-195, and Lys-201. Residues Lys-201, His-220, and 236–244 (GLSGTGKTT) contribute to the ATP site. Mn(2+) contacts are provided by Lys-201 and His-220. Asp-257 is a Mn(2+) binding site. ATP contacts are provided by Glu-285, Arg-323, and Thr-448. Residue Arg-323 coordinates substrate.

The protein belongs to the phosphoenolpyruvate carboxykinase (ATP) family. Mn(2+) is required as a cofactor.

The protein localises to the cytoplasm. It carries out the reaction oxaloacetate + ATP = phosphoenolpyruvate + ADP + CO2. It participates in carbohydrate biosynthesis; gluconeogenesis. Functionally, involved in the gluconeogenesis. Catalyzes the conversion of oxaloacetate (OAA) to phosphoenolpyruvate (PEP) through direct phosphoryl transfer between the nucleoside triphosphate and OAA. In Rhodopseudomonas palustris (strain BisA53), this protein is Phosphoenolpyruvate carboxykinase (ATP).